The sequence spans 258 residues: MQIHPTAIVDSKAELADDVVIKAYSIIGPNVKIGPGTSVGPHAVIDGWTTIGARNQVCSFVAIGHPPQDFSYRDEETRVLIGDDNVFREHVSIHRGTRRGRGTTRVGSRNYIMSAAHIAHDCQIGDNVVMANVAVLGGHVEIGDFAALGGAVAVHQFVRIGTYSFIGGGSGISMDVPPYMLVVGSRPAKLYGLNTTGLKRHDFSANVLSALKKSYRILFRSGLNVRDAVDKIRVEVETCAEVELLLEFVGSSKRGVIR.

It belongs to the transferase hexapeptide repeat family. LpxA subfamily. As to quaternary structure, homotrimer.

It is found in the cytoplasm. It carries out the reaction a (3R)-hydroxyacyl-[ACP] + UDP-N-acetyl-alpha-D-glucosamine = a UDP-3-O-[(3R)-3-hydroxyacyl]-N-acetyl-alpha-D-glucosamine + holo-[ACP]. It functions in the pathway glycolipid biosynthesis; lipid IV(A) biosynthesis; lipid IV(A) from (3R)-3-hydroxytetradecanoyl-[acyl-carrier-protein] and UDP-N-acetyl-alpha-D-glucosamine: step 1/6. Involved in the biosynthesis of lipid A, a phosphorylated glycolipid that anchors the lipopolysaccharide to the outer membrane of the cell. This is Acyl-[acyl-carrier-protein]--UDP-N-acetylglucosamine O-acyltransferase from Syntrophobacter fumaroxidans (strain DSM 10017 / MPOB).